Here is a 132-residue protein sequence, read N- to C-terminus: Small ribosomal subunit protein uS8c (132 aa).

Belongs to the universal ribosomal protein uS8 family. As to quaternary structure, part of the 30S ribosomal subunit.

Its subcellular location is the plastid. It is found in the chloroplast. In terms of biological role, one of the primary rRNA binding proteins, it binds directly to 16S rRNA central domain where it helps coordinate assembly of the platform of the 30S subunit. In Anthoceros angustus (Hornwort), this protein is Small ribosomal subunit protein uS8c (rps8).